A 217-amino-acid polypeptide reads, in one-letter code: Pyridoxine/pyridoxamine 5'-phosphate oxidase (217 aa).

FMN contacts are provided by residues Arg66 to Lys71, Phe81 to Thr82, Arg87, Lys88, and Gln110. Lys71 provides a ligand contact to substrate. Positions 128, 132, and 136 each coordinate substrate. FMN-binding positions include Gln145–Ser146 and Trp190. Arg196–His198 contacts substrate. Arg200 lines the FMN pocket.

This sequence belongs to the pyridoxamine 5'-phosphate oxidase family. Homodimer. Requires FMN as cofactor.

It carries out the reaction pyridoxamine 5'-phosphate + O2 + H2O = pyridoxal 5'-phosphate + H2O2 + NH4(+). The enzyme catalyses pyridoxine 5'-phosphate + O2 = pyridoxal 5'-phosphate + H2O2. The protein operates within cofactor metabolism; pyridoxal 5'-phosphate salvage; pyridoxal 5'-phosphate from pyridoxamine 5'-phosphate: step 1/1. Its pathway is cofactor metabolism; pyridoxal 5'-phosphate salvage; pyridoxal 5'-phosphate from pyridoxine 5'-phosphate: step 1/1. Functionally, catalyzes the oxidation of either pyridoxine 5'-phosphate (PNP) or pyridoxamine 5'-phosphate (PMP) into pyridoxal 5'-phosphate (PLP). The protein is Pyridoxine/pyridoxamine 5'-phosphate oxidase of Colwellia psychrerythraea (strain 34H / ATCC BAA-681) (Vibrio psychroerythus).